Consider the following 248-residue polypeptide: Gas vesicle protein J (248 aa).

One copy of the 1; truncated repeat lies at 121 to 140; it reads DVKDDLYQTSAKIPSPVDTP. The segment at 121–245 is 6 X 21 AA approximate tandem repeats; that stretch reads DVKDDLYQTS…EEIPSSVDPA (125 aa). 5 tandem repeats follow at residues 141–161, 162–182, 183–203, 204–224, and 225–245.

The protein belongs to the gas vesicle GvpA family. In terms of assembly, interacts with GvpA.

Its subcellular location is the gas vesicle. A minor component of the gas vesicle, might be involved in nucleating gas vesicle formation. Gas vesicles (GV) are hollow, gas filled proteinaceous nanostructures. During planktonic growth they allow positioning of the organism at a favorable depth for light or nutrient acquisition. In Dolichospermum flosaquae (Anabaena flos-aquae), this protein is Gas vesicle protein J.